The chain runs to 386 residues: MSELIQNVTTTFAQLFGYDATHLVQAPGRVNLIGEHTDYNDGFVLPCAINYQTVVAAAKREDFLVRLVAVDYDNDTDEFDLREEIAFQPKKMWSNYIRGVIKCLIERGFEFNGADIVVSGNVPQGAGLSSSAALEVVIGQTFKELYQLKISQAEIALNGQQAENQFVGCNCGIMDQMISAQGQANHAMLLDCRSLQTEAVAMPEQMAVVILNSNKKRGLVESEYNTRRQQCEAAAKTFGVKALRDVTLAQLTAKQAELDPVVAKRARHVITENERTLHAAQALREGNMPRLGELMAASHASMRDDFEITVKEIDTLVEIVQSVIGDQGGVRMTGGGFGGCVVALVHPKQVEAVQQAVAEHYEAATGLKASIYVCHATSGAGLVELA.

Position 35-38 (35-38 (EHTD)) interacts with substrate. 125-131 (GAGLSSS) contacts ATP. Residues Ser-131 and Glu-163 each contribute to the Mg(2+) site. Asp-175 acts as the Proton acceptor in catalysis. Tyr-224 contributes to the substrate binding site.

This sequence belongs to the GHMP kinase family. GalK subfamily.

Its subcellular location is the cytoplasm. The catalysed reaction is alpha-D-galactose + ATP = alpha-D-galactose 1-phosphate + ADP + H(+). It functions in the pathway carbohydrate metabolism; galactose metabolism. In terms of biological role, catalyzes the transfer of the gamma-phosphate of ATP to D-galactose to form alpha-D-galactose-1-phosphate (Gal-1-P). The polypeptide is Galactokinase (Vibrio cholerae serotype O1 (strain ATCC 39315 / El Tor Inaba N16961)).